The following is a 249-amino-acid chain: Demethylmenaquinone methyltransferase (249 aa).

S-adenosyl-L-methionine is bound by residues threonine 67, aspartate 87, and 115 to 116 (DA).

It belongs to the class I-like SAM-binding methyltransferase superfamily. MenG/UbiE family.

It carries out the reaction a 2-demethylmenaquinol + S-adenosyl-L-methionine = a menaquinol + S-adenosyl-L-homocysteine + H(+). It participates in quinol/quinone metabolism; menaquinone biosynthesis; menaquinol from 1,4-dihydroxy-2-naphthoate: step 2/2. Functionally, methyltransferase required for the conversion of demethylmenaquinol (DMKH2) to menaquinol (MKH2). This Leptospira interrogans serogroup Icterohaemorrhagiae serovar copenhageni (strain Fiocruz L1-130) protein is Demethylmenaquinone methyltransferase.